A 124-amino-acid chain; its full sequence is Small ribosomal subunit protein uS12 (124 aa).

3-methylthioaspartic acid is present on Asp-89. Residues 105–124 are disordered; the sequence is QGVKNRKQARSRYGAKKEKS. Basic residues predominate over residues 108–118; sequence KNRKQARSRYG.

This sequence belongs to the universal ribosomal protein uS12 family. In terms of assembly, part of the 30S ribosomal subunit. Contacts proteins S8 and S17. May interact with IF1 in the 30S initiation complex.

With S4 and S5 plays an important role in translational accuracy. Its function is as follows. Interacts with and stabilizes bases of the 16S rRNA that are involved in tRNA selection in the A site and with the mRNA backbone. Located at the interface of the 30S and 50S subunits, it traverses the body of the 30S subunit contacting proteins on the other side and probably holding the rRNA structure together. The combined cluster of proteins S8, S12 and S17 appears to hold together the shoulder and platform of the 30S subunit. The sequence is that of Small ribosomal subunit protein uS12 from Mycobacteroides abscessus (strain ATCC 19977 / DSM 44196 / CCUG 20993 / CIP 104536 / JCM 13569 / NCTC 13031 / TMC 1543 / L948) (Mycobacterium abscessus).